The following is a 417-amino-acid chain: 4-hydroxy-3-methylbut-2-enyl diphosphate reductase (417 aa).

Residue Cys-56 participates in [4Fe-4S] cluster binding. Position 86 (His-86) interacts with (2E)-4-hydroxy-3-methylbut-2-enyl diphosphate. Residue His-86 coordinates dimethylallyl diphosphate. His-86 contributes to the isopentenyl diphosphate binding site. Position 151 (Cys-151) interacts with [4Fe-4S] cluster. A (2E)-4-hydroxy-3-methylbut-2-enyl diphosphate-binding site is contributed by His-179. His-179 serves as a coordination point for dimethylallyl diphosphate. His-179 serves as a coordination point for isopentenyl diphosphate. Glu-181 acts as the Proton donor in catalysis. Thr-244 contributes to the (2E)-4-hydroxy-3-methylbut-2-enyl diphosphate binding site. Cys-282 lines the [4Fe-4S] cluster pocket. (2E)-4-hydroxy-3-methylbut-2-enyl diphosphate contacts are provided by Ser-311, Ser-312, Asn-313, and Ser-374. Ser-311, Ser-312, Asn-313, and Ser-374 together coordinate dimethylallyl diphosphate. Residues Ser-311, Ser-312, Asn-313, and Ser-374 each contribute to the isopentenyl diphosphate site.

This sequence belongs to the IspH family. It depends on [4Fe-4S] cluster as a cofactor.

It catalyses the reaction isopentenyl diphosphate + 2 oxidized [2Fe-2S]-[ferredoxin] + H2O = (2E)-4-hydroxy-3-methylbut-2-enyl diphosphate + 2 reduced [2Fe-2S]-[ferredoxin] + 2 H(+). The enzyme catalyses dimethylallyl diphosphate + 2 oxidized [2Fe-2S]-[ferredoxin] + H2O = (2E)-4-hydroxy-3-methylbut-2-enyl diphosphate + 2 reduced [2Fe-2S]-[ferredoxin] + 2 H(+). It functions in the pathway isoprenoid biosynthesis; dimethylallyl diphosphate biosynthesis; dimethylallyl diphosphate from (2E)-4-hydroxy-3-methylbutenyl diphosphate: step 1/1. Its pathway is isoprenoid biosynthesis; isopentenyl diphosphate biosynthesis via DXP pathway; isopentenyl diphosphate from 1-deoxy-D-xylulose 5-phosphate: step 6/6. Catalyzes the conversion of 1-hydroxy-2-methyl-2-(E)-butenyl 4-diphosphate (HMBPP) into a mixture of isopentenyl diphosphate (IPP) and dimethylallyl diphosphate (DMAPP). Acts in the terminal step of the DOXP/MEP pathway for isoprenoid precursor biosynthesis. In Gloeobacter violaceus (strain ATCC 29082 / PCC 7421), this protein is 4-hydroxy-3-methylbut-2-enyl diphosphate reductase.